Consider the following 871-residue polypeptide: DNA mismatch repair protein MutS (871 aa).

605 to 612 is a binding site for ATP; that stretch reads GPNMGGKS. The segment at 791-840 is disordered; that stretch reads PQRPTSASVEQPVDSAKTETAATAEEPQQLSLFPTDEETKPKQPTKKERS. The segment covering 827 to 840 has biased composition (basic and acidic residues); it reads EETKPKQPTKKERS.

This sequence belongs to the DNA mismatch repair MutS family.

Functionally, this protein is involved in the repair of mismatches in DNA. It is possible that it carries out the mismatch recognition step. This protein has a weak ATPase activity. This is DNA mismatch repair protein MutS from Shouchella clausii (strain KSM-K16) (Alkalihalobacillus clausii).